A 369-amino-acid polypeptide reads, in one-letter code: Histidinol-phosphate aminotransferase (369 aa).

Lys223 carries the post-translational modification N6-(pyridoxal phosphate)lysine.

It belongs to the class-II pyridoxal-phosphate-dependent aminotransferase family. Histidinol-phosphate aminotransferase subfamily. In terms of assembly, homodimer. Pyridoxal 5'-phosphate is required as a cofactor.

The enzyme catalyses L-histidinol phosphate + 2-oxoglutarate = 3-(imidazol-4-yl)-2-oxopropyl phosphate + L-glutamate. Its pathway is amino-acid biosynthesis; L-histidine biosynthesis; L-histidine from 5-phospho-alpha-D-ribose 1-diphosphate: step 7/9. Functionally, catalyzes the conversion of imidazole acetol phosphate to histidinol phosphate. Can also transaminate aromatic amino acids and histidine in addition to histidinol phosphate. The protein is Histidinol-phosphate aminotransferase of Zymomonas mobilis subsp. mobilis (strain ATCC 31821 / ZM4 / CP4).